We begin with the raw amino-acid sequence, 339 residues long: RNA 3'-terminal phosphate cyclase (339 aa).

Residues Q101 and 283 to 286 (HMSD) each bind ATP. Residue H307 is the Tele-AMP-histidine intermediate of the active site.

This sequence belongs to the RNA 3'-terminal cyclase family. Type 1 subfamily.

The protein localises to the cytoplasm. It catalyses the reaction a 3'-end 3'-phospho-ribonucleotide-RNA + ATP = a 3'-end 2',3'-cyclophospho-ribonucleotide-RNA + AMP + diphosphate. In terms of biological role, catalyzes the conversion of 3'-phosphate to a 2',3'-cyclic phosphodiester at the end of RNA. The mechanism of action of the enzyme occurs in 3 steps: (A) adenylation of the enzyme by ATP; (B) transfer of adenylate to an RNA-N3'P to produce RNA-N3'PP5'A; (C) and attack of the adjacent 2'-hydroxyl on the 3'-phosphorus in the diester linkage to produce the cyclic end product. The biological role of this enzyme is unknown but it is likely to function in some aspects of cellular RNA processing. The sequence is that of RNA 3'-terminal phosphate cyclase from Sulfurisphaera tokodaii (strain DSM 16993 / JCM 10545 / NBRC 100140 / 7) (Sulfolobus tokodaii).